A 201-amino-acid chain; its full sequence is Recombination protein RecR (201 aa).

The C4-type zinc-finger motif lies at 57 to 72 (CQQCRNFTEEALCEIC). The 96-residue stretch at 81-176 (TTLCIVETPG…NISRIAHGVP (96 aa)) folds into the Toprim domain.

This sequence belongs to the RecR family.

Functionally, may play a role in DNA repair. It seems to be involved in an RecBC-independent recombinational process of DNA repair. It may act with RecF and RecO. The protein is Recombination protein RecR of Colwellia psychrerythraea (strain 34H / ATCC BAA-681) (Vibrio psychroerythus).